We begin with the raw amino-acid sequence, 239 residues long: 4-hydroxy-tetrahydrodipicolinate reductase (239 aa).

Residues 8 to 13, 78 to 80, and 102 to 105 each bind NAD(+); these read GSTGKM, GTT, and SANM. Residue H134 is the Proton donor/acceptor of the active site. H135 is a (S)-2,3,4,5-tetrahydrodipicolinate binding site. K138 acts as the Proton donor in catalysis. Residue 144 to 145 participates in (S)-2,3,4,5-tetrahydrodipicolinate binding; the sequence is GT.

Belongs to the DapB family.

It is found in the cytoplasm. The enzyme catalyses (S)-2,3,4,5-tetrahydrodipicolinate + NAD(+) + H2O = (2S,4S)-4-hydroxy-2,3,4,5-tetrahydrodipicolinate + NADH + H(+). The catalysed reaction is (S)-2,3,4,5-tetrahydrodipicolinate + NADP(+) + H2O = (2S,4S)-4-hydroxy-2,3,4,5-tetrahydrodipicolinate + NADPH + H(+). Its pathway is amino-acid biosynthesis; L-lysine biosynthesis via DAP pathway; (S)-tetrahydrodipicolinate from L-aspartate: step 4/4. Catalyzes the conversion of 4-hydroxy-tetrahydrodipicolinate (HTPA) to tetrahydrodipicolinate. The protein is 4-hydroxy-tetrahydrodipicolinate reductase of Rickettsia peacockii (strain Rustic).